Here is a 197-residue protein sequence, read N- to C-terminus: Probable GTP-binding protein EngB (197 aa).

An EngB-type G domain is found at 22 to 195 (QLPELALAGR…WRTILNHLKV (174 aa)). GTP contacts are provided by residues 30-37 (GRSNVGKS), 57-61 (GKTQT), 75-78 (DVPG), 142-145 (TKAD), and 174-176 (FSS). Mg(2+)-binding residues include Ser-37 and Thr-59.

This sequence belongs to the TRAFAC class TrmE-Era-EngA-EngB-Septin-like GTPase superfamily. EngB GTPase family. Mg(2+) serves as cofactor.

Its function is as follows. Necessary for normal cell division and for the maintenance of normal septation. This is Probable GTP-binding protein EngB from Shouchella clausii (strain KSM-K16) (Alkalihalobacillus clausii).